Consider the following 269-residue polypeptide: Surfeit locus protein 4 (269 aa).

The next 5 membrane-spanning stretches (helical) occupy residues 65–85, 92–112, 179–199, 203–223, and 242–262; these read LASS…VLVL, YACF…SILW, FFSI…AIGF, LAAL…NAFW, and TMSV…GVSM. The Di-lysine motif motif lies at 266 to 269; sequence KKEW.

Belongs to the SURF4 family. As to quaternary structure, found in a complex composed at least of SURF4, TMED2 and TMED10. May interact with LMAN1. Interacts with ZFYVE27 and with KIF5A in a ZFYVE27-dependent manner. Interacts with STING1. Interacts with SAR1B. Interacts with TMEM41B.

It is found in the endoplasmic reticulum membrane. Its subcellular location is the endoplasmic reticulum-Golgi intermediate compartment membrane. The protein resides in the golgi apparatus membrane. In terms of biological role, endoplasmic reticulum cargo receptor that mediates the export of lipoproteins by recruiting cargos into COPII vesicles to facilitate their secretion. Acts as a cargo receptor for lipoproteins bearing both APOB and APOA1, thereby regulating lipoprotein delivery and the maintenance of lipid homeostasis. Synergizes with the GTPase SAR1B to mediate transport of circulating lipoproteins. Promotes the secretion of PCSK9. Also mediates the efficient secretion of erythropoietin (EPO). May also play a role in the maintenance of the architecture of the endoplasmic reticulum-Golgi intermediate compartment and of the Golgi. The polypeptide is Surfeit locus protein 4 (Mus musculus (Mouse)).